The sequence spans 402 residues: uncharacterized protein (402 aa).

This is an uncharacterized protein from Ostreid herpesvirus 1 (isolate France) (OsHV-1).